The following is a 920-amino-acid chain: Alpha-L-rhamnosidase (920 aa).

A signal peptide spans 1–19; the sequence is MCVVRTFWFAVLTVIFAVS. Cys20 is lipidated: N-palmitoyl cysteine. Cys20 carries the S-diacylglycerol cysteine lipid modification. Residues Asp500, 504–506, Asp513, and Trp565 each bind alpha-L-rhamnose; that span reads RDE. The active-site Proton donor is Glu506. The active-site Proton acceptor is Glu779. Residue His800 coordinates alpha-L-rhamnose.

It belongs to the glycosyl hydrolase 78 family.

The protein resides in the cell membrane. The enzyme catalyses Hydrolysis of terminal non-reducing alpha-L-rhamnose residues in alpha-L-rhamnosides.. Its function is as follows. Alpha-L-rhamnosidase involved in ulvan degradation. Ulvan is the main polysaccharide component of the Ulvales (green seaweed) cell wall. It is composed of disaccharide building blocks comprising 3-sulfated rhamnose (Rha3S) linked to D-glucuronic acid (GlcA), L-iduronic acid (IduA), or D-xylose (Xyl). The enzyme is able to degrade p-nitrophenyl-alpha-L-rhamnopyranoside (PNP-Rha) in vitro. Incubating the enzyme with the products obtained after degradation with ulvan lyase and beta-glucuronyl hydrolase (i.e. the trisaccharides beta-alpha-L-Rha3S-IduA-Rha3S and beta-alpha-L-Rha3S-GlcA-Rha3S) showed no degradation, suggesting that the enzyme is active on neutral rhamnose and that desulfation of the oligosaccharide must be achieved before cleavage of rhamnose. The protein is Alpha-L-rhamnosidase of Alteromonas sp. (strain LOR).